A 327-amino-acid polypeptide reads, in one-letter code: Glycerol-3-phosphate dehydrogenase [NAD(P)+] (327 aa).

Residues tryptophan 11, arginine 30, and lysine 103 each coordinate NADPH. Sn-glycerol 3-phosphate-binding residues include lysine 103, glycine 131, and serine 133. Alanine 135 provides a ligand contact to NADPH. Lysine 186, aspartate 243, serine 253, arginine 254, and asparagine 255 together coordinate sn-glycerol 3-phosphate. Lysine 186 acts as the Proton acceptor in catalysis. Arginine 254 contacts NADPH. Positions 281 and 283 each coordinate NADPH.

Belongs to the NAD-dependent glycerol-3-phosphate dehydrogenase family.

It localises to the cytoplasm. It catalyses the reaction sn-glycerol 3-phosphate + NAD(+) = dihydroxyacetone phosphate + NADH + H(+). The catalysed reaction is sn-glycerol 3-phosphate + NADP(+) = dihydroxyacetone phosphate + NADPH + H(+). The protein operates within membrane lipid metabolism; glycerophospholipid metabolism. Its function is as follows. Catalyzes the reduction of the glycolytic intermediate dihydroxyacetone phosphate (DHAP) to sn-glycerol 3-phosphate (G3P), the key precursor for phospholipid synthesis. The sequence is that of Glycerol-3-phosphate dehydrogenase [NAD(P)+] from Wolbachia sp. subsp. Drosophila simulans (strain wRi).